The chain runs to 881 residues: DNA replication helicase (881 aa).

Gly90 to Ser97 contributes to the ATP binding site.

It belongs to the herpesviridae helicase family. As to quaternary structure, associates with the primase and the primase-associated factor to form the helicase-primase complex.

The protein resides in the host nucleus. In terms of biological role, component of the helicase/primase complex. Unwinds the DNA at the replication forks and generates single-stranded DNA for both leading and lagging strand synthesis. The primase synthesizes short RNA primers on the lagging strand that the polymerase elongates using dNTPs. Possesses helicase-like motifs and therefore may act as the helicase subunit of the complex. This Homo sapiens (Human) protein is DNA replication helicase.